We begin with the raw amino-acid sequence, 338 residues long: uncharacterized protein (338 aa).

The tract at residues 1-20 (MYNNNQNHHNNDNNMNKDEP) is disordered. The span at 9-20 (HNNDNNMNKDEP) shows a compositional bias: basic and acidic residues. N-linked (GlcNAc...) asparagine glycans are attached at residues asparagine 37, asparagine 83, asparagine 97, asparagine 105, asparagine 114, and asparagine 122. A disordered region spans residues 55–92 (VNSGNNNNNNNNNNNNNNNNNNNNNNNNNDSIVINMDT). Residues 59 to 92 (NNNNNNNNNNNNNNNNNNNNNNNNNDSIVINMDT) show a composition bias toward low complexity. Transmembrane regions (helical) follow at residues 148-168 (YKKFISSLSYITFIGAAIVLI), 178-198 (FHAYQSFYISMGVIGFQFLLI), and 202-222 (ILSIILWSLYLLFTIFMFLKV). N-linked (GlcNAc...) asparagine glycosylation is found at asparagine 229, asparagine 240, asparagine 286, asparagine 302, asparagine 317, and asparagine 322. 2 disordered regions span residues 279–303 (SNLNRNNNNSNNVNNNGHQRINSNS) and 316–338 (LNSSGSNSSIYSDVQNDIGTNEE). Residues 280–294 (NLNRNNNNSNNVNNN) are compositionally biased toward low complexity. The span at 316–327 (LNSSGSNSSIYS) shows a compositional bias: low complexity. Residues 328-338 (DVQNDIGTNEE) are compositionally biased toward polar residues.

It localises to the membrane. This is an uncharacterized protein from Dictyostelium discoideum (Social amoeba).